A 689-amino-acid polypeptide reads, in one-letter code: Elongation factor G (689 aa).

Positions 8–282 (LNTRNIGIMA…AVVDYLPSPL (275 aa)) constitute a tr-type G domain. GTP-binding positions include 17–24 (AHIDAGKT), 81–85 (DTPGH), and 135–138 (NKMD).

This sequence belongs to the TRAFAC class translation factor GTPase superfamily. Classic translation factor GTPase family. EF-G/EF-2 subfamily.

Its subcellular location is the cytoplasm. In terms of biological role, catalyzes the GTP-dependent ribosomal translocation step during translation elongation. During this step, the ribosome changes from the pre-translocational (PRE) to the post-translocational (POST) state as the newly formed A-site-bound peptidyl-tRNA and P-site-bound deacylated tRNA move to the P and E sites, respectively. Catalyzes the coordinated movement of the two tRNA molecules, the mRNA and conformational changes in the ribosome. In Mycoplasma mycoides subsp. mycoides SC (strain CCUG 32753 / NCTC 10114 / PG1), this protein is Elongation factor G.